The chain runs to 156 residues: Ribosomal RNA large subunit methyltransferase H (156 aa).

S-adenosyl-L-methionine-binding positions include leucine 74, glycine 105, and 124 to 129; that span reads LSKLTL.

This sequence belongs to the RNA methyltransferase RlmH family. In terms of assembly, homodimer.

The protein localises to the cytoplasm. It catalyses the reaction pseudouridine(1915) in 23S rRNA + S-adenosyl-L-methionine = N(3)-methylpseudouridine(1915) in 23S rRNA + S-adenosyl-L-homocysteine + H(+). Functionally, specifically methylates the pseudouridine at position 1915 (m3Psi1915) in 23S rRNA. In Legionella pneumophila (strain Lens), this protein is Ribosomal RNA large subunit methyltransferase H.